The chain runs to 31 residues: Cytochrome b6-f complex subunit 6 (31 aa).

Residues 3–23 (ILISYFCFLLIFFLFTLILFF) traverse the membrane as a helical segment.

The protein belongs to the PetL family. The 4 large subunits of the cytochrome b6-f complex are cytochrome b6, subunit IV (17 kDa polypeptide, PetD), cytochrome f and the Rieske protein, while the 4 small subunits are PetG, PetL, PetM and PetN. The complex functions as a dimer.

It localises to the plastid. Its subcellular location is the chloroplast thylakoid membrane. In terms of biological role, component of the cytochrome b6-f complex, which mediates electron transfer between photosystem II (PSII) and photosystem I (PSI), cyclic electron flow around PSI, and state transitions. PetL is important for photoautotrophic growth as well as for electron transfer efficiency and stability of the cytochrome b6-f complex. The protein is Cytochrome b6-f complex subunit 6 of Gnetum parvifolium (Small-leaved jointfir).